Consider the following 181-residue polypeptide: Peptide deformylase (181 aa).

Fe cation is bound by residues cysteine 103 and histidine 145. Residue glutamate 146 is part of the active site. Residue histidine 149 participates in Fe cation binding.

The protein belongs to the polypeptide deformylase family. Fe(2+) is required as a cofactor.

The catalysed reaction is N-terminal N-formyl-L-methionyl-[peptide] + H2O = N-terminal L-methionyl-[peptide] + formate. Its function is as follows. Removes the formyl group from the N-terminal Met of newly synthesized proteins. Requires at least a dipeptide for an efficient rate of reaction. N-terminal L-methionine is a prerequisite for activity but the enzyme has broad specificity at other positions. The protein is Peptide deformylase of Orientia tsutsugamushi (strain Boryong) (Rickettsia tsutsugamushi).